A 473-amino-acid polypeptide reads, in one-letter code: uncharacterized protein (473 aa).

The SET domain maps to 26–254 (PKLYIASSGV…KMSEIFNSFG (229 aa)).

This is an uncharacterized protein from Schizosaccharomyces pombe (strain 972 / ATCC 24843) (Fission yeast).